Here is a 323-residue protein sequence, read N- to C-terminus: ATP synthase gamma chain (323 aa).

The protein belongs to the ATPase gamma chain family. As to quaternary structure, F-type ATPases have 2 components, CF(1) - the catalytic core - and CF(0) - the membrane proton channel. CF(1) has five subunits: alpha(3), beta(3), gamma(1), delta(1), epsilon(1). CF(0) has three main subunits: a, b and c.

The protein resides in the cell inner membrane. Functionally, produces ATP from ADP in the presence of a proton gradient across the membrane. The gamma chain is believed to be important in regulating ATPase activity and the flow of protons through the CF(0) complex. The chain is ATP synthase gamma chain from Rickettsia peacockii (strain Rustic).